A 235-amino-acid chain; its full sequence is Phosphoglycolate phosphatase (235 aa).

Aspartate 14 functions as the Nucleophile in the catalytic mechanism. Positions 14, 16, and 177 each coordinate Mg(2+).

Belongs to the HAD-like hydrolase superfamily. CbbY/CbbZ/Gph/YieH family. Mg(2+) is required as a cofactor.

It catalyses the reaction 2-phosphoglycolate + H2O = glycolate + phosphate. It participates in organic acid metabolism; glycolate biosynthesis; glycolate from 2-phosphoglycolate: step 1/1. Specifically catalyzes the dephosphorylation of 2-phosphoglycolate. Is involved in the dissimilation of the intracellular 2-phosphoglycolate formed during the DNA repair of 3'-phosphoglycolate ends, a major class of DNA lesions induced by oxidative stress. The chain is Phosphoglycolate phosphatase from Neisseria meningitidis serogroup A / serotype 4A (strain DSM 15465 / Z2491).